A 649-amino-acid chain; its full sequence is Exoribonuclease 2 (649 aa).

Residues 190 to 517 (RKDLTDLDFI…NHRLLKSIIK (328 aa)) form the RNB domain. One can recognise an S1 motif domain in the interval 562–644 (NQKFNAEITD…KTRSIIAKPV (83 aa)).

Belongs to the RNR ribonuclease family. RNase II subfamily.

The protein resides in the cytoplasm. The catalysed reaction is Exonucleolytic cleavage in the 3'- to 5'-direction to yield nucleoside 5'-phosphates.. Functionally, involved in mRNA degradation. Hydrolyzes single-stranded polyribonucleotides processively in the 3' to 5' direction. This is Exoribonuclease 2 from Buchnera aphidicola subsp. Acyrthosiphon pisum (strain 5A).